A 461-amino-acid chain; its full sequence is Dihydrolipoyl dehydrogenase (461 aa).

FAD is bound by residues 33–41 (EAAEVGGVC), lysine 50, and alanine 112. Cysteine 41 and cysteine 46 are joined by a disulfide. NAD(+)-binding positions include 173–177 (GGGAV), glutamate 196, and 263–266 (AVGR). The FAD site is built by aspartate 306 and alanine 314. Residue histidine 437 is the Proton acceptor of the active site.

This sequence belongs to the class-I pyridine nucleotide-disulfide oxidoreductase family. Homodimer. It depends on FAD as a cofactor.

The protein localises to the membrane. It catalyses the reaction N(6)-[(R)-dihydrolipoyl]-L-lysyl-[protein] + NAD(+) = N(6)-[(R)-lipoyl]-L-lysyl-[protein] + NADH + H(+). Functionally, has chromate reductase activity. This is Dihydrolipoyl dehydrogenase from Thermus scotoductus (strain ATCC 700910 / SA-01).